The sequence spans 256 residues: Type III pantothenate kinase (256 aa).

Residue 6-13 (DIGNTHIV) coordinates ATP. Substrate is bound at residue 109-112 (GADR). The Proton acceptor role is filled by Asp-111. Asp-132 is a binding site for K(+). Thr-135 provides a ligand contact to ATP. Thr-186 serves as a coordination point for substrate.

Belongs to the type III pantothenate kinase family. As to quaternary structure, homodimer. It depends on NH4(+) as a cofactor. K(+) serves as cofactor.

It is found in the cytoplasm. The catalysed reaction is (R)-pantothenate + ATP = (R)-4'-phosphopantothenate + ADP + H(+). It participates in cofactor biosynthesis; coenzyme A biosynthesis; CoA from (R)-pantothenate: step 1/5. In terms of biological role, catalyzes the phosphorylation of pantothenate (Pan), the first step in CoA biosynthesis. The protein is Type III pantothenate kinase of Fusobacterium nucleatum subsp. nucleatum (strain ATCC 25586 / DSM 15643 / BCRC 10681 / CIP 101130 / JCM 8532 / KCTC 2640 / LMG 13131 / VPI 4355).